Here is a 744-residue protein sequence, read N- to C-terminus: Adenosylcobalamin-dependent ribonucleoside-triphosphate reductase (744 aa).

Cysteine 120 and cysteine 424 are disulfide-bonded. The segment at 148–159 (SMPFSFLFDQLM) is effector region-1. The interval 169–318 (VNSNIKQIPK…ICNLIGKTVV (150 aa)) is effector region-2. Active-site residues include cysteine 413 and glutamate 415. The segment at 570–631 (FHYAGYLIQR…SKNFASAGTV (62 aa)) is adenosylcobalamin-binding-1. The interval 690 to 729 (LKQAPKEPINKKTYEERAALITDDVEEVFTKQNDDQKGLE) is adenosylcobalamin-binding-2.

Belongs to the class II ribonucleoside-triphosphate reductase family. As to quaternary structure, monomer. It depends on adenosylcob(III)alamin as a cofactor.

It carries out the reaction a 2'-deoxyribonucleoside 5'-triphosphate + [thioredoxin]-disulfide + H2O = a ribonucleoside 5'-triphosphate + [thioredoxin]-dithiol. Its activity is regulated as follows. Allosterically regulated by ATP and dNTP. This is Adenosylcobalamin-dependent ribonucleoside-triphosphate reductase (rtpR) from Lactobacillus acidophilus (strain ATCC 700396 / NCK56 / N2 / NCFM).